Here is a 296-residue protein sequence, read N- to C-terminus: Meiotically up-regulated gene 2 protein (296 aa).

Belongs to the UPF0612 family.

Its subcellular location is the cytoplasm. It localises to the nucleus. Functionally, has a role in meiosis. The chain is Meiotically up-regulated gene 2 protein (mug2) from Schizosaccharomyces pombe (strain 972 / ATCC 24843) (Fission yeast).